We begin with the raw amino-acid sequence, 212 residues long: uncharacterized protein (212 aa).

This is an uncharacterized protein from Acanthamoeba polyphaga mimivirus (APMV).